A 292-amino-acid polypeptide reads, in one-letter code: Shikimate dehydrogenase (NADP(+)) (292 aa).

Shikimate is bound by residues 25–27 (SKS) and T72. Catalysis depends on K76, which acts as the Proton acceptor. 2 residues coordinate shikimate: N97 and D113. Residues 137-141 (GAGGA), 161-166 (NRTQSK), and M230 each bind NADP(+). Position 232 (Y232) interacts with shikimate. G254 provides a ligand contact to NADP(+).

This sequence belongs to the shikimate dehydrogenase family. Homodimer.

The catalysed reaction is shikimate + NADP(+) = 3-dehydroshikimate + NADPH + H(+). Its pathway is metabolic intermediate biosynthesis; chorismate biosynthesis; chorismate from D-erythrose 4-phosphate and phosphoenolpyruvate: step 4/7. Its function is as follows. Involved in the biosynthesis of the chorismate, which leads to the biosynthesis of aromatic amino acids. Catalyzes the reversible NADPH linked reduction of 3-dehydroshikimate (DHSA) to yield shikimate (SA). This is Shikimate dehydrogenase (NADP(+)) from Shewanella sp. (strain MR-7).